The chain runs to 511 residues: Potassium voltage-gated channel subfamily A member 10 (511 aa).

The disordered stretch occupies residues 22–50; sequence IQEEPGYATDFDSTSPKGRPGGSSFSNGK. The helical transmembrane segment at 218–238 threads the bilayer; that stretch reads VAVVSVLVVVISITIFCLETL. Asn256 carries an N-linked (GlcNAc...) asparagine glycan. The chain crosses the membrane as a helical span at residues 271-292; the sequence is FFMVESTCIVWFTFELVLRFVV. Residue Cys293 is the site of S-palmitoyl cysteine attachment. Residues 303 to 323 traverse the membrane as a helical segment; the sequence is IMNIIDIISIIPYFATLITEL. The N-linked (GlcNAc...) asparagine glycan is linked to Asn334. The chain crosses the membrane as a helical; Voltage-sensor span at residues 339 to 358; that stretch reads ILRIIRLVRVFRIFKLSRHS. Residues 375-395 traverse the membrane as a helical segment; it reads LGLLIFFLFIGVILFSSAVYF. Residues 421 to 426 carry the Selectivity filter motif; it reads TVGYGD. The chain crosses the membrane as a helical span at residues 436-456; it reads IVGTLCAIAGVLTIALPVPVI. The tract at residues 489–511 is disordered; it reads SRMGSTDSLNKTNGGCSTEKSRK. Asn498 carries N-linked (GlcNAc...) asparagine glycosylation.

This sequence belongs to the potassium channel family. A (Shaker) (TC 1.A.1.2) subfamily. Kv1.8/KCNA10 sub-subfamily. Homotetramer. Interacts with KCN4B/POMP. Interaction with KCN4B/POMP is necessary for the modulation of channel activity by cAMP. Detected in kidney, in proximal tubules, glomerular endothelium, in vascular endothelium and in smooth muscle cells.

It is found in the membrane. It carries out the reaction K(+)(in) = K(+)(out). Its activity is regulated as follows. The channel activity is up-regulated by cAMP. Its function is as follows. Voltage-gated potassium ion channel that mediates K(+) permeability of excitable membranes. When opened in response to the voltage difference across the membrane, KCNA10 channel selectively allows the flow of potassium ions across the membrane down their electrochemical gradient. The protein is Potassium voltage-gated channel subfamily A member 10 of Homo sapiens (Human).